Reading from the N-terminus, the 3649-residue chain is N-(5-amino-5-carboxypentanoyl)-L-cysteinyl-D-valine synthase (3649 aa).

The interval Ser401–His861 is domain 1 (adipate-activating). 3 Carrier domains span residues Ala783–Gly860, Ala1859–Ala1936, and Ala2909–Leu2984. 3 positions are modified to O-(pantetheine 4'-phosphoryl)serine: Ser820, Ser1896, and Ser2944. A domain 2 (cysteine-activating) region spans residues His1014–Leu1937. The segment at His2079–Ala2985 is domain 3 (valine-activating). Residue Ser3502 is the For thioesterase activity of the active site.

The protein belongs to the ATP-dependent AMP-binding enzyme family. Pantetheine 4'-phosphate is required as a cofactor.

The catalysed reaction is L-2-aminoadipate + L-valine + L-cysteine + 3 ATP + H2O = N-[(5S)-5-amino-5-carboxypentanoyl]-L-cysteinyl-D-valine + 3 AMP + 3 diphosphate + 3 H(+). It participates in antibiotic biosynthesis; penicillin G biosynthesis; penicillin G from L-alpha-aminoadipate and L-cysteine and L-valine: step 1/3. Functionally, each of the constituent amino acids of the tripeptide acv are activated as aminoacyl-adenylates with peptide bonds formed through the participation of amino acid thioester intermediates. This chain is N-(5-amino-5-carboxypentanoyl)-L-cysteinyl-D-valine synthase (pcbAB), found in Amycolatopsis lactamdurans (Nocardia lactamdurans).